Here is a 561-residue protein sequence, read N- to C-terminus: Methionine--tRNA ligase (561 aa).

The 'HIGH' region signature appears at 11–21; sequence PYVNTVPHLGN. Residues C143, C146, C156, and C159 each coordinate Zn(2+). K334 serves as a coordination point for ATP.

Belongs to the class-I aminoacyl-tRNA synthetase family. MetG type 1 subfamily. The cofactor is Zn(2+).

Its subcellular location is the cytoplasm. The catalysed reaction is tRNA(Met) + L-methionine + ATP = L-methionyl-tRNA(Met) + AMP + diphosphate. Is required not only for elongation of protein synthesis but also for the initiation of all mRNA translation through initiator tRNA(fMet) aminoacylation. This Ignicoccus hospitalis (strain KIN4/I / DSM 18386 / JCM 14125) protein is Methionine--tRNA ligase.